Here is a 128-residue protein sequence, read N- to C-terminus: Ribonuclease P protein component (128 aa).

Belongs to the RnpA family. In terms of assembly, consists of a catalytic RNA component (M1 or rnpB) and a protein subunit.

It catalyses the reaction Endonucleolytic cleavage of RNA, removing 5'-extranucleotides from tRNA precursor.. In terms of biological role, RNaseP catalyzes the removal of the 5'-leader sequence from pre-tRNA to produce the mature 5'-terminus. It can also cleave other RNA substrates such as 4.5S RNA. The protein component plays an auxiliary but essential role in vivo by binding to the 5'-leader sequence and broadening the substrate specificity of the ribozyme. The polypeptide is Ribonuclease P protein component (Prochlorococcus marinus (strain MIT 9215)).